The chain runs to 938 residues: Ankyrin repeat and LEM domain-containing protein 2 (938 aa).

Residues 1-12 (MLWPRLAAAEWA) lie on the Lumenal side of the membrane. Residues 13 to 32 (ALAWELLGASVLLIAVRWLV) form a helical; Signal-anchor for type III membrane protein membrane-spanning segment. Over 33–938 (RRLGPRPGGL…MARLAELAAL (906 aa)) the chain is Cytoplasmic. The LEM domain maps to 69-113 (LARLKLLNPDDLREEIVKAGLKCGPITSTTRFIFEKKLAQALLEQ). A phosphoserine mark is found at serine 259 and serine 268. One copy of the ANK repeat lies at 411–440 (GYDTPLHFACKFGNADVVNVLSSHHLIVKN). Phosphoserine occurs at positions 488, 496, 512, and 528. Over residues 609 to 627 (GKKAQQETGEREASCRDKA) the composition is skewed to basic and acidic residues. The segment at 609–636 (GKKAQQETGEREASCRDKATTSGSNSIS) is disordered. Serine 662, serine 804, serine 896, and serine 914 each carry phosphoserine. The segment at 870–924 (RQSWPSPAVKGRFKSQLPDLSGPHSYSPGRNSVAGSNPAKPGLGSPGRYSPVHGS) is disordered.

The protein belongs to the ANKLE2 family. Interacts with BAF/BANF1. Interacts with protein phosphatase 2A (PP2A) components PPP2C (PPP2CA or PPP2CB) and PPP2R1A. As to quaternary structure, (Microbial infection) May interact with non-structural protein 4A/NS4A from Zika virus strains Mr-766 or French Polynesia 10087PF/2013; the interaction may inhibit ANKLE2 function and contribute to defects in brain development, such as microcephaly.

The protein localises to the endoplasmic reticulum membrane. Involved in mitotic nuclear envelope reassembly by promoting dephosphorylation of BAF/BANF1 during mitotic exit. Coordinates the control of BAF/BANF1 dephosphorylation by inhibiting VRK1 kinase and promoting dephosphorylation of BAF/BANF1 by protein phosphatase 2A (PP2A), thereby facilitating nuclear envelope assembly. May regulate nuclear localization of VRK1 in non-dividing cells. It is unclear whether it acts as a real PP2A regulatory subunit or whether it is involved in recruitment of the PP2A complex. Involved in brain development. This is Ankyrin repeat and LEM domain-containing protein 2 (ANKLE2) from Homo sapiens (Human).